Here is a 245-residue protein sequence, read N- to C-terminus: Biosynthetic peptidoglycan transglycosylase (245 aa).

Residues 20–42 (VYAGSVFAGAWLATQLFYLAQIA) traverse the membrane as a helical segment.

This sequence belongs to the glycosyltransferase 51 family.

The protein localises to the cell inner membrane. The enzyme catalyses [GlcNAc-(1-&gt;4)-Mur2Ac(oyl-L-Ala-gamma-D-Glu-L-Lys-D-Ala-D-Ala)](n)-di-trans,octa-cis-undecaprenyl diphosphate + beta-D-GlcNAc-(1-&gt;4)-Mur2Ac(oyl-L-Ala-gamma-D-Glu-L-Lys-D-Ala-D-Ala)-di-trans,octa-cis-undecaprenyl diphosphate = [GlcNAc-(1-&gt;4)-Mur2Ac(oyl-L-Ala-gamma-D-Glu-L-Lys-D-Ala-D-Ala)](n+1)-di-trans,octa-cis-undecaprenyl diphosphate + di-trans,octa-cis-undecaprenyl diphosphate + H(+). Its pathway is cell wall biogenesis; peptidoglycan biosynthesis. Functionally, peptidoglycan polymerase that catalyzes glycan chain elongation from lipid-linked precursors. In Burkholderia cenocepacia (strain HI2424), this protein is Biosynthetic peptidoglycan transglycosylase.